A 335-amino-acid polypeptide reads, in one-letter code: MSGSILLLPLAIALGLGFFIARPESTVTPVAEAPTSSPAANLTAARPAQRTATGAAPQVTAKLPASFKGTEVDGQFQLDAAGNLIIGPELRQLFDYFLSAIGEEPLKQSIERLRRHIAAQLPEPAQAQALAVLNQYLNYKRQLVDFEAQHPRVADLASMRDRLSAVRALRAHALDPATHQAFFGLEEAYDHFSLERLAIRFDPALDSDAKGRAIDQLRAGLPAELQDLLMPQLQTELREQTTALLANGAGPQQLRQLRQQLVGSEAADRLEALDLQRRQWQQRVASYQQERTRIETARGLDEVERRAAVERLEAQRFSDSERLRLLAVVQEDRTR.

Residues 1-21 traverse the membrane as a helical segment; sequence MSGSILLLPLAIALGLGFFIA.

It belongs to the lipase chaperone family.

It is found in the cell inner membrane. May be involved in the folding of the extracellular lipase during its passage through the periplasm. This Stutzerimonas stutzeri (strain A1501) (Pseudomonas stutzeri) protein is Lipase chaperone.